A 62-amino-acid polypeptide reads, in one-letter code: UPF0337 protein mll8179 (62 aa).

The segment at 1-42 is disordered; it reads MRNMVNKDQVAGLAKQLKGSVKQAAGKATGNRRTQAEGMADK.

It belongs to the UPF0337 (CsbD) family.

The chain is UPF0337 protein mll8179 from Mesorhizobium japonicum (strain LMG 29417 / CECT 9101 / MAFF 303099) (Mesorhizobium loti (strain MAFF 303099)).